The sequence spans 304 residues: Acetyl-coenzyme A carboxylase carboxyl transferase subunit beta (304 aa).

The CoA carboxyltransferase N-terminal domain occupies 23-292 (VWTKCDSCGQ…PNPDAPREGV (270 aa)). Zn(2+) contacts are provided by Cys27, Cys30, Cys46, and Cys49. The segment at 27-49 (CDSCGQVLYRAELERNLEVCPKC) adopts a C4-type zinc-finger fold. The disordered stretch occupies residues 284–304 (NPDAPREGVVVPPAPDQESEV).

Belongs to the AccD/PCCB family. Acetyl-CoA carboxylase is a heterohexamer composed of biotin carboxyl carrier protein (AccB), biotin carboxylase (AccC) and two subunits each of ACCase subunit alpha (AccA) and ACCase subunit beta (AccD). Zn(2+) is required as a cofactor.

Its subcellular location is the cytoplasm. The enzyme catalyses N(6)-carboxybiotinyl-L-lysyl-[protein] + acetyl-CoA = N(6)-biotinyl-L-lysyl-[protein] + malonyl-CoA. Its pathway is lipid metabolism; malonyl-CoA biosynthesis; malonyl-CoA from acetyl-CoA: step 1/1. Its function is as follows. Component of the acetyl coenzyme A carboxylase (ACC) complex. Biotin carboxylase (BC) catalyzes the carboxylation of biotin on its carrier protein (BCCP) and then the CO(2) group is transferred by the transcarboxylase to acetyl-CoA to form malonyl-CoA. The protein is Acetyl-coenzyme A carboxylase carboxyl transferase subunit beta of Salmonella paratyphi A (strain ATCC 9150 / SARB42).